The chain runs to 674 residues: Methionine--tRNA ligase (674 aa).

The short motif at 12-22 (PYANGPIHLGH) is the 'HIGH' region element. Zn(2+) is bound by residues Cys-143, Cys-146, Cys-156, and Cys-159. Residues 328 to 332 (KMSKS) carry the 'KMSKS' region motif. Lys-331 contacts ATP. One can recognise a tRNA-binding domain in the interval 573-674 (SFAKLDLRIA…EGARPGMRVK (102 aa)).

This sequence belongs to the class-I aminoacyl-tRNA synthetase family. MetG type 1 subfamily. In terms of assembly, homodimer. Requires Zn(2+) as cofactor.

The protein resides in the cytoplasm. The catalysed reaction is tRNA(Met) + L-methionine + ATP = L-methionyl-tRNA(Met) + AMP + diphosphate. In terms of biological role, is required not only for elongation of protein synthesis but also for the initiation of all mRNA translation through initiator tRNA(fMet) aminoacylation. The chain is Methionine--tRNA ligase from Nitrosococcus oceani (strain ATCC 19707 / BCRC 17464 / JCM 30415 / NCIMB 11848 / C-107).